A 1026-amino-acid polypeptide reads, in one-letter code: Contactin-4 (1026 aa).

The first 18 residues, 1 to 18 (MRLPWELLVLQSFILCLA), serve as a signal peptide directing secretion. 6 consecutive Ig-like C2-type domains span residues 32 to 117 (PSPV…AKLQ), 122 to 207 (DNFK…KVLG), 225 to 311 (PKIE…GQLT), 316 to 400 (PNWI…AELS), 406 to 493 (PDFS…GNLV), and 497 to 586 (PTRV…DRLS). Cystine bridges form between cysteine 50–cysteine 100, cysteine 144–cysteine 194, cysteine 247–cysteine 295, cysteine 337–cysteine 384, cysteine 429–cysteine 477, and cysteine 519–cysteine 576. Residues asparagine 65, asparagine 90, and asparagine 191 are each glycosylated (N-linked (GlcNAc...) asparagine). N-linked (GlcNAc...) asparagine glycosylation is found at asparagine 370, asparagine 375, and asparagine 466. 4 consecutive Fibronectin type-III domains span residues 599–697 (PPEA…TEEA), 702–799 (TPAN…SAEE), 804–899 (PPAS…TRKP), and 900–995 (PPSQ…ISNA). The disordered stretch occupies residues 685 to 710 (PSRPSEKRRTEEALPEVTPANVSGGG). The span at 687–696 (RPSEKRRTEE) shows a compositional bias: basic and acidic residues. 7 N-linked (GlcNAc...) asparagine glycosylation sites follow: asparagine 705, asparagine 764, asparagine 858, asparagine 893, asparagine 911, asparagine 929, and asparagine 954. Over residues 886–896 (GPSSATVNVTT) the composition is skewed to polar residues. The segment at 886-907 (GPSSATVNVTTRKPPPSQPPGN) is disordered. The GPI-anchor amidated serine moiety is linked to residue serine 1000. Positions 1001 to 1026 (GASTSNACTLSAISTIMISLTARSSL) are cleaved as a propeptide — removed in mature form.

Belongs to the immunoglobulin superfamily. Contactin family. Interacts with PTPRG. In terms of tissue distribution, mainly expressed in brain. Highly expressed in cerebellum and weakly expressed in corpus callosum, caudate nucleus, amygdala and spinal cord. Also expressed in testis, pancreas, thyroid, uterus, small intestine and kidney. Not expressed in skeletal muscle. Isoform 2 is weakly expressed in cerebral cortex.

The protein localises to the cell membrane. It localises to the secreted. In terms of biological role, contactins mediate cell surface interactions during nervous system development. Has some neurite outgrowth-promoting activity. May be involved in synaptogenesis. This is Contactin-4 (CNTN4) from Homo sapiens (Human).